Reading from the N-terminus, the 661-residue chain is Sorting nexin-4 (661 aa).

2 stretches are compositionally biased toward polar residues: residues M1 to W10 and H26 to N36. Disordered stretches follow at residues M1–D49 and T56–R75. Acidic residues predominate over residues I38–D49. A compositionally biased stretch (polar residues) spans T56–E70. In terms of domain architecture, PX spans V77–W198. A 1,2-diacyl-sn-glycero-3-phospho-(1D-myo-inositol-3-phosphate)-binding residues include R120, S122, K146, and R165. The segment covering L554 to Q572 has biased composition (basic and acidic residues). Positions L554–W661 are disordered. The span at A624–Q640 shows a compositional bias: polar residues. The span at D645–W661 shows a compositional bias: acidic residues.

The protein belongs to the sorting nexin family.

It is found in the cytoplasm. Its subcellular location is the membrane. The protein localises to the vacuole membrane. Functionally, sorting nexin involved in the separation or division of vacuoles throughout the entire life cycle of the cells. Required for glucose-induced micropexophagy and ethanol-induced macropexophagy. Involved in the fusion between the pexophagosome and the vacuole. Also involved in the separation or division of vacuoles throughout the entire life cycle of the cells. The protein is Sorting nexin-4 (SNX4) of Komagataella pastoris (Yeast).